A 360-amino-acid polypeptide reads, in one-letter code: MLVYLAEYLTRFHTGFNVFSYVTFRAILGLLTALVFSLWFGPKLIERLQLLQIGQVVRNDGPESHFSKRGTPTMGGLLILAAIFISVLLWGDLGSRYVWVMLFVLGSFGLIGFIDDYRKVVRKDTKGLIARWKYILQSLAALLIAFFLYATAANPGETQLVVPFFKDVMPQLGAVFIVLAYFTIVGSSNAVNLTDGLDGLAIMPTVMVAAAFALIAYLSGHAQFANYLHIPHLPGSGELVIVCTAIVGAGLGFLWFNTYPAQVFMGDVGSLSLGAALGTIAVLVRQEILLVIMGGVFVMETLSVILQVGSYKLRGQRIFRMAPIHHHYELKGWPEPRVIVRFWIISIFLVLLGLATLKLR.

A run of 10 helical transmembrane segments spans residues 26–46, 74–94, 97–117, 134–154, 168–188, 199–219, 236–256, 263–283, 288–308, and 338–358; these read AILG…KLIE, MGGL…GDLG, YVWV…IDDY, YILQ…TAAN, VMPQ…VGSS, GLAI…AYLS, SGEL…FLWF, VFMG…IAVL, ILLV…ILQV, and VIVR…ATLK.

It belongs to the glycosyltransferase 4 family. MraY subfamily. Mg(2+) is required as a cofactor.

The protein localises to the cell inner membrane. The catalysed reaction is UDP-N-acetyl-alpha-D-muramoyl-L-alanyl-gamma-D-glutamyl-meso-2,6-diaminopimeloyl-D-alanyl-D-alanine + di-trans,octa-cis-undecaprenyl phosphate = di-trans,octa-cis-undecaprenyl diphospho-N-acetyl-alpha-D-muramoyl-L-alanyl-D-glutamyl-meso-2,6-diaminopimeloyl-D-alanyl-D-alanine + UMP. The protein operates within cell wall biogenesis; peptidoglycan biosynthesis. Functionally, catalyzes the initial step of the lipid cycle reactions in the biosynthesis of the cell wall peptidoglycan: transfers peptidoglycan precursor phospho-MurNAc-pentapeptide from UDP-MurNAc-pentapeptide onto the lipid carrier undecaprenyl phosphate, yielding undecaprenyl-pyrophosphoryl-MurNAc-pentapeptide, known as lipid I. This Shewanella baltica (strain OS195) protein is Phospho-N-acetylmuramoyl-pentapeptide-transferase.